The primary structure comprises 443 residues: F-box/LRR-repeat protein At2g42720 (443 aa).

The 47-residue stretch at 1–47 (MDRISSLPDEILEHILSFLSTKEAALTSSLSTRWKNVFVFVPSLHLD) folds into the F-box domain. 6 LRR repeats span residues 139–167 (KLRL…CLDT), 169–194 (DFDG…VLED), 201–236 (CGSV…ELSC), 271–296 (SSHL…HLTS), 323–348 (DKKQ…VFKG), and 363–389 (CSGI…SYQG).

The protein is F-box/LRR-repeat protein At2g42720 of Arabidopsis thaliana (Mouse-ear cress).